The primary structure comprises 89 residues: Acylphosphatase (89 aa).

One can recognise an Acylphosphatase-like domain in the interval 3–89; it reads CKRWILYGRV…GNYGSFHIEY (87 aa). Catalysis depends on residues Arg-18 and Asn-36.

It belongs to the acylphosphatase family.

The catalysed reaction is an acyl phosphate + H2O = a carboxylate + phosphate + H(+). The protein is Acylphosphatase (acyP) of Petrotoga mobilis (strain DSM 10674 / SJ95).